A 262-amino-acid polypeptide reads, in one-letter code: VPS74-like protein DDB_G0288371 (262 aa).

It belongs to the GOLPH3/VPS74 family.

The protein localises to the golgi apparatus. The protein resides in the golgi stack membrane. Phosphatidylinositol-4-phosphate-binding protein that links Golgi membranes to the cytoskeleton and may participate in the tensile force required for vesicle budding from the Golgi. Thereby, may play a role in Golgi membrane trafficking. May also bind to the coatomer to regulate Golgi membrane trafficking. May play a role in anterograde transport from the Golgi to the plasma membrane and regulate secretion. May be involved in vacuolar protein sorting. This chain is VPS74-like protein DDB_G0288371, found in Dictyostelium discoideum (Social amoeba).